Consider the following 288-residue polypeptide: Methyltransferase ucsB (288 aa).

S-adenosyl-L-methionine-binding positions include Asp-87 and 121 to 122 (DA).

This sequence belongs to the class I-like SAM-binding methyltransferase superfamily.

It participates in mycotoxin biosynthesis. Methyltransferase; part of the gene cluster that mediates the biosynthesis of UCS1025A, a member of the pyrrolizidinone family that acts as a strong telomerase inhibitor and displays potent antibacterial and antitumor properties. These compounds share a hemiaminal-containing pyrrolizidinone core fused with a gamma-lactone, giving a furopyrrolizidine that is connected to a decalin fragment. The polyketide synthase module (PKS) of the PKS-NRPS ucsA is responsible for the synthesis of the polyketide backbone via the condensation of an acetyl-CoA starter unit with 6 malonyl-CoA units. The downstream nonribosomal peptide synthetase (NRPS) module then amidates the carboxyl end of the polyketide with a 2S,3S-methylproline derived from L-isoleucine by the 2-oxoglutarate-dependent dioxygenase ucsF which converts L-isoleucine to (4S,5S)-4-methylpyrroline-5-carboxylate that is further converted to 2S,3S-methylproline by the pyrroline-5-carboxylate reductase ucsG. Reductive release of the completed aminoacyl polyketide from the assembly line can form the 3-pyrrolin-2-one structure via an intramolecular Knoevenagel reaction. Because ucsA lacks a designated enoylreductase (ER) domain, the required activity is provided the enoyl reductase ucsL. This keto acyclic precursor is the substrate of the Diels-Alderase ucsH, that catalyzes the Diels-Alder cycloaddition. Oxidation of the 3S-methyl group to a carboxylate by the cytochrome P450 monooxygenase ucsK allows an oxa-Michael cyclization that might involve the reductase/dehydrogenase ucsI and which furnishes the furopyrrolizidine. The oxidase ucsJ likely plays a critical role in stereoselective reduction of the C5-C6 double bond to afford the required R-configured carboxylate group. Further enolization and oxidation at C5 by an unidentified enzyme affords the last intermediate that can undergo oxa-Michael cyclization to yield UCS1025A. This is Methyltransferase ucsB from Acremonium sp.